Here is a 394-residue protein sequence, read N- to C-terminus: Guanine nucleotide-binding protein G(s) subunit alpha isoforms short (394 aa).

Residues Met1 to Asn23 form a disordered region. Gly2 is lipidated: N-palmitoyl glycine. Residue Cys3 is the site of S-palmitoyl cysteine attachment. Basic and acidic residues predominate over residues Lys8–Asn23. In terms of domain architecture, G-alpha spans Ala39–Leu394. The segment at Arg42–Thr55 is G1 motif. Gly47 to Thr55 is a GTP binding site. Ser54 lines the Mg(2+) pocket. The segment at Phe68 to Thr90 is disordered. The G2 motif stretch occupies residues Asp196–Thr204. GTP-binding positions include Leu197–Thr204, Asp223–Gln227, and Asn292–Asp295. Thr204 contributes to the Mg(2+) binding site. Residues Phe219–Arg228 form a G3 motif region. Residues Ile288–Asp295 form a G4 motif region. Lys300 is covalently cross-linked (Glycyl lysine isopeptide (Lys-Gly) (interchain with G-Cter in ubiquitin)). Phosphoserine is present on Ser352. A G5 motif region spans residues Thr364 to Thr369. Ala366 lines the GTP pocket.

Belongs to the G-alpha family. G(s) subfamily. Heterotrimeric G proteins are composed of 3 units; alpha, beta and gamma. The alpha chain contains the guanine nucleotide binding site. Component of the TAS2R14-GNAS2 complex, consisting of TAS2R14, GNAS2, GNB1 and GNG2; within the complex interacts with TAS2R14; this complex plays a role in the perception of bitterness. Interacts with CRY1; the interaction may block GPCR-mediated regulation of cAMP concentrations. Interacts with ADCY6 and stimulates its adenylyl cyclase activity. Interacts with ADCY2 and ADCY5. Interacts (GDP-bound form) with RIC8B; promoting GNAS folding and association with the plasma membrane. Stimulates the ADCY5 adenylyl cyclase activity. Interaction with SASH1. Interacts with GASL2L2.

Its subcellular location is the cell membrane. It catalyses the reaction GTP + H2O = GDP + phosphate + H(+). Guanine nucleotide-binding proteins (G proteins) function as transducers in numerous signaling pathways controlled by G protein-coupled receptors (GPCRs). The alpha chain contains the guanine nucleotide binding site and alternates between an active, GTP-bound state and an inactive, GDP-bound state. Signaling by an activated GPCR promotes GDP release and GTP binding. The alpha subunit has a low GTPase activity that converts bound GTP to GDP, thereby terminating the signal. Both GDP release and GTP hydrolysis are modulated by numerous regulatory proteins. Signaling involves the activation of adenylyl cyclases, resulting in increased levels of the signaling molecule cAMP. Functions downstream of beta-adrenergic receptors. Stimulates the Ras signaling pathway via RAPGEF2. This chain is Guanine nucleotide-binding protein G(s) subunit alpha isoforms short (Gnas), found in Mus musculus (Mouse).